The sequence spans 264 residues: MIKYIGVFAFLVGGFCHDFETVISNQDPIVDGMRLVEGDMLFDDGPLFTERNAVKYDQQLWPNGEIVYEISPGLRQYEQIIREAMRTYEDNTCIKFRRRTNEADYVNIHVGDRCYSRVGKSFRGGPQPLSLGRGCTDFGTILHELGHSVGFDHEHSRADRDEFLIIHKENIKNGSEHNFDKLWENNTRTIGPFDYDSIMLYGAYAFSKDTRKFKTMEPVEPGLPMKSVIQKGKLSYYDIVKVNKLYKCPPVNPYPGGIRPYVNV.

The first 16 residues, 1 to 16, serve as a signal peptide directing secretion; that stretch reads MIKYIGVFAFLVGGFC. Positions 17–51 are excised as a propeptide; the sequence is HDFETVISNQDPIVDGMRLVEGDMLFDDGPLFTER. The region spanning 52–249 is the Peptidase M12A domain; that stretch reads NAVKYDQQLW…VKVNKLYKCP (198 aa). Intrachain disulfides connect Cys93–Cys248 and Cys114–Cys135. A Zn(2+)-binding site is contributed by His143. Glu144 is a catalytic residue. Residues His147 and His153 each contribute to the Zn(2+) site. 2 N-linked (GlcNAc...) asparagine glycosylation sites follow: Asn173 and Asn185.

As to quaternary structure, monomer. Requires Zn(2+) as cofactor. As to expression, expressed by the venom gland.

The protein localises to the secreted. Its activity is regulated as follows. Inhibited by 1,10-phenanthroline. Functionally, zinc metalloprotease. Provoques deadhesion of endothelial cells from cell cultures, and also degradation of fibronectin, fibrinogen and gelatin in vitro. Its role in the venom is not fully understood but it might act as a spreading factor that facilitates diffusion of other venom toxins. Alternatively, it might be involved in the proteolytic processing of other venom toxins or it might play a role in extra-oral digestion of prey. The chain is Astacin-like metalloprotease toxin 1 from Loxosceles intermedia (Brown spider).